We begin with the raw amino-acid sequence, 89 residues long: Small ribosomal subunit protein uS14A (89 aa).

The protein belongs to the universal ribosomal protein uS14 family. In terms of assembly, contacts proteins S3 and S10. Part of the 30S ribosomal subunit.

Its function is as follows. Binds 16S rRNA, required for the assembly of 30S particles and may also be responsible for determining the conformation of the 16S rRNA at the A site. Non-essential protein. A second form of uS14, it can integrate into the 30S subunit where it partially compensates for loss of the major uS14 protein (AC P12878) in restoring 70S formation, although it does not seem to be incorporated into the ribosome as well as the major uS14. This is Small ribosomal subunit protein uS14A from Bacillus subtilis (strain 168).